The chain runs to 588 residues: A-type ATP synthase subunit A (588 aa).

237–244 lines the ATP pocket; sequence GPFGSGKT.

It belongs to the ATPase alpha/beta chains family. In terms of assembly, has multiple subunits with at least A(3), B(3), C, D, E, F, H, I and proteolipid K(x).

It localises to the cell membrane. The enzyme catalyses ATP + H2O + 4 H(+)(in) = ADP + phosphate + 5 H(+)(out). Component of the A-type ATP synthase that produces ATP from ADP in the presence of a proton gradient across the membrane. The A chain is the catalytic subunit. This is A-type ATP synthase subunit A from Methanoregula boonei (strain DSM 21154 / JCM 14090 / 6A8).